We begin with the raw amino-acid sequence, 726 residues long: Catalase-peroxidase (726 aa).

The disordered stretch occupies residues 1–33 (MSTTDDTHNTLSTGKCPFHQGGHDRSAGAGTAS). The tryptophyl-tyrosyl-methioninium (Trp-Tyr) (with M-252) cross-link spans 105-226 (WHGAGTYRSI…LGATEMGLIY (122 aa)). His-106 functions as the Proton acceptor in the catalytic mechanism. The segment at residues 226–252 (YVNPEGPDHSGEPLSAAAAIRATFGNM) is a cross-link (tryptophyl-tyrosyl-methioninium (Tyr-Met) (with W-105)). Heme b is bound at residue His-267.

This sequence belongs to the peroxidase family. Peroxidase/catalase subfamily. In terms of assembly, homodimer or homotetramer. The cofactor is heme b. Post-translationally, formation of the three residue Trp-Tyr-Met cross-link is important for the catalase, but not the peroxidase activity of the enzyme.

It carries out the reaction H2O2 + AH2 = A + 2 H2O. The catalysed reaction is 2 H2O2 = O2 + 2 H2O. Functionally, bifunctional enzyme with both catalase and broad-spectrum peroxidase activity. This Salmonella schwarzengrund (strain CVM19633) protein is Catalase-peroxidase.